The primary structure comprises 301 residues: CRISPR-associated endonuclease Cas1 (301 aa).

Positions 133, 200, and 213 each coordinate Mn(2+).

The protein belongs to the CRISPR-associated endonuclease Cas1 family. As to quaternary structure, homodimer, forms a heterotetramer with a Cas2 homodimer. Requires Mg(2+) as cofactor. Mn(2+) is required as a cofactor.

Functionally, CRISPR (clustered regularly interspaced short palindromic repeat), is an adaptive immune system that provides protection against mobile genetic elements (viruses, transposable elements and conjugative plasmids). CRISPR clusters contain spacers, sequences complementary to antecedent mobile elements, and target invading nucleic acids. CRISPR clusters are transcribed and processed into CRISPR RNA (crRNA). Acts as a dsDNA endonuclease. Involved in the integration of spacer DNA into the CRISPR cassette. This chain is CRISPR-associated endonuclease Cas1, found in Clostridium sp. (strain SY8519).